The primary structure comprises 617 residues: uncharacterized protein (617 aa).

The region spanning 33–134 (TEDDFRGEKF…FXNATKQKGS (102 aa)) is the B12-binding N-terminal domain. Residues glutamate 84, 146 to 150 (GDVHD), histidine 149, serine 194, threonine 198, and alanine 251 contribute to the methylcob(III)alamin site. Residues 136 to 272 (NGKVVIATVK…NPEGRAALWE (137 aa)) enclose the B12-binding domain. The region spanning 288–617 (SKPLRKQLSI…MMKWLGVAMK (330 aa)) is the AdoMet activation domain. Residues aspartate 337, arginine 528, and 583–584 (YF) contribute to the S-adenosyl-L-methionine site.

This sequence belongs to the vitamin-B12 dependent methionine synthase family.

This is an uncharacterized protein from Haemophilus influenzae (strain ATCC 51907 / DSM 11121 / KW20 / Rd).